Here is a 108-residue protein sequence, read N- to C-terminus: PTS system fructose-like EIIB component 1 (108 aa).

The region spanning 1 to 104 (MSKKLIALCA…IIKEIEEMIA (104 aa)) is the PTS EIIB type-2 domain. Residue C11 is the Phosphocysteine intermediate of the active site. Phosphocysteine; by EIIA is present on C11.

Its subcellular location is the cytoplasm. The enzyme catalyses D-fructose(out) + N(pros)-phospho-L-histidyl-[protein] = D-fructose 1-phosphate(in) + L-histidyl-[protein]. Its function is as follows. The phosphoenolpyruvate-dependent sugar phosphotransferase system (sugar PTS), a major carbohydrate active transport system, catalyzes the phosphorylation of incoming sugar substrates concomitantly with their translocation across the cell membrane. The enzyme II FryABC PTS system is involved in fructose transport. The polypeptide is PTS system fructose-like EIIB component 1 (fryB) (Escherichia coli O157:H7).